Reading from the N-terminus, the 90-residue chain is Molybdopterin synthase sulfur carrier subunit (90 aa).

G90 is subject to 1-thioglycine; alternate. G90 bears the Glycyl adenylate; alternate mark.

Belongs to the MoaD family. MOCS2A subfamily. Heterotetramer; composed of 2 small (Mocs2A) and 2 large (Mocs2B) subunits. C-terminal thiocarboxylation occurs in 2 steps, it is first acyl-adenylated (-COAMP) via the hesA/moeB/thiF part of MOCS3, then thiocarboxylated (-COSH) via the rhodanese domain of MOCS3.

The protein resides in the cytoplasm. It functions in the pathway cofactor biosynthesis; molybdopterin biosynthesis. Its function is as follows. Acts as a sulfur carrier required for molybdopterin biosynthesis. Component of the molybdopterin synthase complex that catalyzes the conversion of precursor Z into molybdopterin by mediating the incorporation of 2 sulfur atoms into precursor Z to generate a dithiolene group. In the complex, serves as sulfur donor by being thiocarboxylated (-COSH) at its C-terminus by MOCS3. After interaction with Mocs2B, the sulfur is then transferred to precursor Z to form molybdopterin. Involved during biosynthesis of the molybdenum cofactor. This chain is Molybdopterin synthase sulfur carrier subunit, found in Drosophila melanogaster (Fruit fly).